The primary structure comprises 336 residues: Inactive serine/threonine-protein kinase PLK5 (336 aa).

Residues 1 to 65 (MYTVLTGTPP…LDHLLQDDFF (65 aa)) form the Protein kinase; truncated domain. Disordered stretches follow at residues 109–135 (PCPFTPKEASGPGEGGPDPDSMEWDGE) and 224–245 (GRTGRHPHGPATPRREGTLPTP). Positions 255–336 (LLRFLASEHA…HHALRMLQSI (82 aa)) constitute a POLO box domain.

It belongs to the protein kinase superfamily. Ser/Thr protein kinase family. CDC5/Polo subfamily. Expressed in the brain, neurons and glial cells. Also expressed in highly differentiated cells, such as the serous acini in the parotid gland, distal and proximal tubules of the kidney, tubules of the seminal gland, Kupffer cells and some hepatocytes in the liver, and some cells in the germinal center of lymph nodes (at protein level).

The protein resides in the nucleus. The protein localises to the nucleolus. It is found in the cytoplasm. Functionally, inactive serine/threonine-protein kinase that plays a role in cell cycle progression and neuronal differentiation. This chain is Inactive serine/threonine-protein kinase PLK5 (PLK5), found in Homo sapiens (Human).